The primary structure comprises 261 residues: Phosphoinositide-3-kinase-interacting protein 1 (261 aa).

The signal sequence occupies residues 1-21; that stretch reads MLLAWVRTILVSNMLLAEAYG. Residues 22-166 are Extracellular-facing; that stretch reads SGGCFWDNGH…NSKEKKDLGT (145 aa). Residues 24–101 enclose the Kringle domain; it reads GCFWDNGHLY…EKRPCQDLRC (78 aa). 3 disulfides stabilise this stretch: Cys-25–Cys-101, Cys-46–Cys-82, and Cys-70–Cys-96. Over residues 90–101 the composition is skewed to basic and acidic residues; the sequence is APEKRPCQDLRC. Residues 90–122 form a disordered region; sequence APEKRPCQDLRCPDTTSQGLPTSATETEEAAEV. Residues 167 to 187 form a helical membrane-spanning segment; that stretch reads LGYVLGITMMVIIVVIGAGIV. At 188 to 261 the chain is on the cytoplasmic side; that stretch reads LGYTYKRGKD…LMGQAGTPGA (74 aa).

It localises to the cell membrane. Its function is as follows. Negative regulator of hepatic phosphatidylinositol 3-kinase (PI3K) activity. This Bos taurus (Bovine) protein is Phosphoinositide-3-kinase-interacting protein 1 (PIK3IP1).